A 544-amino-acid polypeptide reads, in one-letter code: tRNA pseudouridine synthase 1 (544 aa).

2 stretches are compositionally biased toward basic and acidic residues: residues 1–10 and 31–61; these read MSEENLRPAY and RKAD…RLDE. The interval 1-74 is disordered; the sequence is MSEENLRPAY…PLPKEPRLPK (74 aa). The Nucleophile role is filled by D134. The tract at residues 495-544 is disordered; sequence IPGLTDAPESNKKIKQRKRMEEEEAASKKAEISSTTQSNEPEVQPEAAAN. The span at 513-525 shows a compositional bias: basic and acidic residues; the sequence is RMEEEEAASKKAE.

The protein belongs to the tRNA pseudouridine synthase TruA family. Zn(2+) serves as cofactor.

The protein resides in the nucleus. It catalyses the reaction a uridine in tRNA = a pseudouridine in tRNA. The enzyme catalyses uridine in snRNA = pseudouridine in snRNA. The catalysed reaction is a uridine in mRNA = a pseudouridine in mRNA. Functionally, formation of pseudouridine at positions 27 and 28 in the anticodon stem and loop of transfer RNAs; at positions 34 and 36 of intron-containing precursor tRNA(Ile) and at position 35 in the intron-containing tRNA(Tyr). Catalyzes pseudouridylation at position 44 in U2 snRNA. Also catalyzes pseudouridylation of mRNAs. The protein is tRNA pseudouridine synthase 1 (PUS1) of Saccharomyces cerevisiae (strain ATCC 204508 / S288c) (Baker's yeast).